The following is a 205-amino-acid chain: Probable calcium-binding protein CML41 (205 aa).

The interval 26–55 (SFQNRRRSPKSNSSSTLNSPRSNSDDNNNI) is disordered. Positions 35 to 54 (KSNSSSTLNSPRSNSDDNNN) are enriched in low complexity. EF-hand domains follow at residues 60-95 (ASKEELRQVFSHFDSDGDGKISAFELRHYFGSVGEY), 96-131 (ISHEAAQEAINEVDTDADGSLGFEDFVGLMTRRDLY), 137-173 (DGDGELKTAFEMFEVEKGSGCITPKGLQKMLVKLGES), and 174-205 (RTYGECEAMIKFYDIDGNGILDFHEFRQMMTV). Residues Asp73, Asp75, Asp77, Lys79, Glu84, Asp109, Asp111, Asp113, Ser115, and Asp120 each contribute to the Ca(2+) site. Asp187, Asp189, Asn191, and Glu198 together coordinate Ca(2+).

In terms of biological role, potential calcium sensor. This is Probable calcium-binding protein CML41 (CML41) from Arabidopsis thaliana (Mouse-ear cress).